The chain runs to 139 residues: CLAVATA3/ESR (CLE)-related protein 1 (139 aa).

An N-terminal signal peptide occupies residues methionine 1–alanine 22. The interval serine 23 to methionine 90 is required for secretion from the host cytoplasm to the host apoplasm. Residues asparagine 37 and asparagine 87 are each glycosylated (N-linked (GlcNAc...) asparagine). The disordered stretch occupies residues alanine 66–histidine 139. Residues glutamate 100 to aspartate 125 adopt a coiled-coil conformation. The segment covering arginine 106–arginine 128 has biased composition (basic and acidic residues). Positions arginine 128 to histidine 139 match the CLE motif.

Belongs to the CLV3/ESR signal peptide family. Highly expressed exclusively within the dorsal esophageal gland cell during syncytium formation in host plants (at protein level).

The protein localises to the secreted. Its subcellular location is the host cytoplasm. It is found in the host extracellular space. The protein resides in the extracellular space. It localises to the apoplast. Functionally, mimics host plant CLE extracellular signal peptides that regulate cell fate. May play a role in the differentiation or division of feeding cells (syncytia) induced in plant roots during infection. This chain is CLAVATA3/ESR (CLE)-related protein 1 (CLE1), found in Heterodera glycines (Soybean cyst nematode worm).